A 174-amino-acid polypeptide reads, in one-letter code: MRITVLRLGHRPERDKRITTHVGLVARAFGADEILIEGRDESVVESLRDVVNRWGGSFSVTDGIAWRDELRRFRDSGGKIVHLTMYGRRIDEVIGEIRSCERIMVVVGAEKVPPDVYDIADWNVAVGNQPHSEVAALAVFLDRLFMGEELEKDFGGRLKVIPAARGKVVLDRGL.

S-adenosyl-L-methionine is bound by residues Leu83, 108-112 (GAEKV), and 126-133 (VGNQPHSE).

This sequence belongs to the aTrm56 family. As to quaternary structure, homodimer.

The protein localises to the cytoplasm. The catalysed reaction is cytidine(56) in tRNA + S-adenosyl-L-methionine = 2'-O-methylcytidine(56) in tRNA + S-adenosyl-L-homocysteine + H(+). In terms of biological role, specifically catalyzes the AdoMet-dependent 2'-O-ribose methylation of cytidine at position 56 in tRNAs. The sequence is that of tRNA (cytidine(56)-2'-O)-methyltransferase from Methanothrix thermoacetophila (strain DSM 6194 / JCM 14653 / NBRC 101360 / PT) (Methanosaeta thermophila).